A 236-amino-acid chain; its full sequence is Exosome complex component Rrp4 (236 aa).

The region spanning 64–133 (GDKVIGKIIE…EIKESWLTLK (70 aa)) is the S1 motif domain. The KH domain maps to 141 to 199 (EGGHMVLIHASRVPRVIGKGGGMVNMVKELTSTRIIIGQNGLIWIDGPIEGVTMAIAAI).

It belongs to the RRP4 family. Component of the archaeal exosome complex. Forms a trimer of Rrp4 and/or Csl4 subunits. The trimer associates with a hexameric ring-like arrangement composed of 3 Rrp41-Rrp42 heterodimers.

The protein localises to the cytoplasm. Its function is as follows. Non-catalytic component of the exosome, which is a complex involved in RNA degradation. Increases the RNA binding and the efficiency of RNA degradation. Confers strong poly(A) specificity to the exosome. This is Exosome complex component Rrp4 from Thermoplasma volcanium (strain ATCC 51530 / DSM 4299 / JCM 9571 / NBRC 15438 / GSS1).